We begin with the raw amino-acid sequence, 359 residues long: Guanine nucleotide-binding protein alpha-4 subunit (359 aa).

Gly2 carries the N-myristoyl glycine lipid modification. Cys3 carries S-palmitoyl cysteine lipidation. A G-alpha domain is found at 31-359 (GEIKLLLLGA…RNNLYLCGLY (329 aa)). Positions 34-47 (KLLLLGAGESGKST) are G1 motif. GTP-binding positions include 39-46 (GAGESGKS), 178-184 (LRARVKS), 203-207 (DVGGQ), 272-275 (NKMD), and Ala331. Ser46 is a binding site for Mg(2+). The tract at residues 176–184 (DILRARVKS) is G2 motif. Residues 199–208 (FKMFDVGGQR) are G3 motif. Positions 268–275 (ILFLNKMD) are G4 motif. The G5 motif stretch occupies residues 329 to 334 (TCATDT).

This sequence belongs to the G-alpha family. G(i/o/t/z) subfamily. In terms of assembly, g proteins are composed of 3 units; alpha, beta and gamma. The alpha chain contains the guanine nucleotide binding site. In terms of tissue distribution, expressed in ASI neurons.

Its function is as follows. Guanine nucleotide-binding proteins (G proteins) are involved as modulators or transducers in various transmembrane signaling systems. Acts in concert with npr-15 to activate TGF-beta-like daf-7 secretion in the ASI neuron, thereby promoting larval development and inhibition of dauer diapause. This Caenorhabditis elegans protein is Guanine nucleotide-binding protein alpha-4 subunit (gpa-4).